The primary structure comprises 70 residues: Phycobilisome 8.1 kDa linker polypeptide, phycocyanin-associated, rod (70 aa).

The CpcD-like domain maps to Ser-5–Leu-63.

The protein belongs to the phycobilisome linker protein family.

It localises to the cellular thylakoid membrane. Rod linker protein, associated with phycocyanin. Linker polypeptides determine the state of aggregation and the location of the disk-shaped phycobiliprotein units within the phycobilisome and modulate their spectroscopic properties in order to mediate a directed and optimal energy transfer. The chain is Phycobilisome 8.1 kDa linker polypeptide, phycocyanin-associated, rod (cpcD3) from Microchaete diplosiphon (Fremyella diplosiphon).